The sequence spans 315 residues: Malate dehydrogenase (315 aa).

NAD(+) contacts are provided by residues 11–16 (GAGHVG) and Asp-35. Arg-84 and Arg-90 together coordinate substrate. NAD(+) is bound by residues Asn-97 and 120–122 (VTN). Substrate is bound by residues Asn-122 and Arg-153. Catalysis depends on His-177, which acts as the Proton acceptor.

It belongs to the LDH/MDH superfamily. MDH type 3 family.

The enzyme catalyses (S)-malate + NAD(+) = oxaloacetate + NADH + H(+). Its function is as follows. Catalyzes the reversible oxidation of malate to oxaloacetate. This is Malate dehydrogenase from Thermosulfidibacter takaii (strain DSM 17441 / JCM 13301 / NBRC 103674 / ABI70S6).